The chain runs to 425 residues: 5-methylthioadenosine/S-adenosylhomocysteine deaminase (425 aa).

Zn(2+) contacts are provided by His-63 and His-65. Substrate-binding residues include Glu-92 and His-184. Position 211 (His-211) interacts with Zn(2+). Residues Glu-214 and Asp-299 each coordinate substrate. Position 299 (Asp-299) interacts with Zn(2+).

Belongs to the metallo-dependent hydrolases superfamily. MTA/SAH deaminase family. The cofactor is Zn(2+).

It carries out the reaction S-adenosyl-L-homocysteine + H2O + H(+) = S-inosyl-L-homocysteine + NH4(+). The enzyme catalyses S-methyl-5'-thioadenosine + H2O + H(+) = S-methyl-5'-thioinosine + NH4(+). Its function is as follows. Catalyzes the deamination of 5-methylthioadenosine and S-adenosyl-L-homocysteine into 5-methylthioinosine and S-inosyl-L-homocysteine, respectively. Is also able to deaminate adenosine. The protein is 5-methylthioadenosine/S-adenosylhomocysteine deaminase of Pyrococcus abyssi (strain GE5 / Orsay).